A 158-amino-acid polypeptide reads, in one-letter code: VLIMELINNVAKAHGGYTVFAGVGERTREGNDLYHEMIESGVISLKDKTSKVALVYGQMNEPPGARARVALTGLTVAEYFRDQEGQDVLLFIDNIFRFTQAGSEVSALLGRIPSAVGYQPTLATDMGTMQERITTTSKGSITSVQAIYVPADDLTDPA.

It belongs to the ATPase alpha/beta chains family. F-type ATPases have 2 components, CF(1) - the catalytic core - and CF(0) - the membrane proton channel. CF(1) has five subunits: alpha(3), beta(3), gamma(1), delta(1), epsilon(1). CF(0) has three main subunits: a, b and c.

The protein resides in the mitochondrion. Its subcellular location is the mitochondrion inner membrane. The enzyme catalyses ATP + H2O + 4 H(+)(in) = ADP + phosphate + 5 H(+)(out). Its function is as follows. Mitochondrial membrane ATP synthase (F(1)F(0) ATP synthase or Complex V) produces ATP from ADP in the presence of a proton gradient across the membrane which is generated by electron transport complexes of the respiratory chain. F-type ATPases consist of two structural domains, F(1) - containing the extramembraneous catalytic core, and F(0) - containing the membrane proton channel, linked together by a central stalk and a peripheral stalk. During catalysis, ATP synthesis in the catalytic domain of F(1) is coupled via a rotary mechanism of the central stalk subunits to proton translocation. Subunits alpha and beta form the catalytic core in F(1). Rotation of the central stalk against the surrounding alpha(3)beta(3) subunits leads to hydrolysis of ATP in three separate catalytic sites on the beta subunits. This chain is ATP synthase subunit beta, mitochondrial, found in Schizaphis graminum (Green bug aphid).